The sequence spans 224 residues: Biosynthetic peptidoglycan transglycosylase (224 aa).

Residues 9–29 (VLILVSFVLLIQLWIFCSLAW) traverse the membrane as a helical segment.

The protein belongs to the glycosyltransferase 51 family.

The protein resides in the cell inner membrane. It catalyses the reaction [GlcNAc-(1-&gt;4)-Mur2Ac(oyl-L-Ala-gamma-D-Glu-L-Lys-D-Ala-D-Ala)](n)-di-trans,octa-cis-undecaprenyl diphosphate + beta-D-GlcNAc-(1-&gt;4)-Mur2Ac(oyl-L-Ala-gamma-D-Glu-L-Lys-D-Ala-D-Ala)-di-trans,octa-cis-undecaprenyl diphosphate = [GlcNAc-(1-&gt;4)-Mur2Ac(oyl-L-Ala-gamma-D-Glu-L-Lys-D-Ala-D-Ala)](n+1)-di-trans,octa-cis-undecaprenyl diphosphate + di-trans,octa-cis-undecaprenyl diphosphate + H(+). It functions in the pathway cell wall biogenesis; peptidoglycan biosynthesis. Functionally, peptidoglycan polymerase that catalyzes glycan chain elongation from lipid-linked precursors. The sequence is that of Biosynthetic peptidoglycan transglycosylase from Acinetobacter baylyi (strain ATCC 33305 / BD413 / ADP1).